The following is a 67-amino-acid chain: Large ribosomal subunit protein bL31 (67 aa).

The protein belongs to the bacterial ribosomal protein bL31 family. Type A subfamily. As to quaternary structure, part of the 50S ribosomal subunit.

Binds the 23S rRNA. This Helicobacter acinonychis (strain Sheeba) protein is Large ribosomal subunit protein bL31.